The following is a 162-amino-acid chain: Type IV major fimbrial protein FimA (162 aa).

Positions 1–7 (MKSLQKG) are cleaved as a propeptide — leader sequence. N-methylphenylalanine is present on phenylalanine 8. Residues 8–28 (FTLIELMIVVAIIGILAAFAI) form a helical membrane-spanning segment. Cysteine 63 and cysteine 106 are oxidised to a cystine.

Belongs to the N-Me-Phe pilin family.

It localises to the fimbrium. The protein resides in the membrane. In terms of biological role, major component of the type IV fimbriae that plays an essential role in twitching motility, natural transformation, and protease secretion. This is Type IV major fimbrial protein FimA (fimA) from Dichelobacter nodosus (strain VCS1703A).